A 513-amino-acid polypeptide reads, in one-letter code: Glucose-6-phosphate 1-dehydrogenase 2 (513 aa).

An N-acetylalanine modification is found at Ala-2. Position 8 is a phosphoserine (Ser-8). Thr-10 carries the phosphothreonine modification. Residues 38 to 45 and Arg-72 each bind NADP(+); that span reads GASGDLAK. Lys-89 carries the post-translational modification N6-acetyllysine. Tyr-147 and Lys-171 together coordinate NADP(+). Residues Lys-171, 201 to 205, Glu-239, and Asp-258 contribute to the D-glucose 6-phosphate site; that span reads HYLDK. Lys-171 carries the post-translational modification N6-(2-hydroxyisobutyryl)lysine; alternate. Lys-171 bears the N6-acetyllysine; alternate mark. His-263 functions as the Proton acceptor in the catalytic mechanism. An NADP(+)-binding site is contributed by Arg-357. Positions 360 and 365 each coordinate D-glucose 6-phosphate. NADP(+) is bound by residues Lys-366, Arg-370, and Arg-393. Gln-395 is a binding site for D-glucose 6-phosphate. 421-423 is a binding site for NADP(+); sequence DLT. Lys-432 is subject to N6-acetyllysine. Residues Arg-487 and Tyr-503 each coordinate NADP(+). At Tyr-503 the chain carries Phosphotyrosine.

Belongs to the glucose-6-phosphate dehydrogenase family. As to quaternary structure, homotetramer; dimer of dimers. Interacts with SIRT2; the interaction is enhanced by H(2)O(2) treatment. Acetylated by ELP3; acetylation inhibits its homodimerization and enzyme activity. Deacetylated by SIRT2; deacetylation stimulates its enzyme activity. In terms of tissue distribution, testis.

The protein resides in the cytoplasm. The protein localises to the cytosol. Its subcellular location is the membrane. It carries out the reaction D-glucose 6-phosphate + NADP(+) = 6-phospho-D-glucono-1,5-lactone + NADPH + H(+). The protein operates within carbohydrate degradation; pentose phosphate pathway; D-ribulose 5-phosphate from D-glucose 6-phosphate (oxidative stage): step 1/3. Its function is as follows. Catalyzes the rate-limiting step of the oxidative pentose-phosphate pathway, which represents a route for the dissimilation of carbohydrates besides glycolysis. The main function of this enzyme is to provide reducing power (NADPH) and pentose phosphates for fatty acid and nucleic acid synthesis. This chain is Glucose-6-phosphate 1-dehydrogenase 2 (G6pd2), found in Mus musculus (Mouse).